Here is a 572-residue protein sequence, read N- to C-terminus: MGKVILLPEEIRNKIAAGEVIERPVSVVKELVENSIDAGAKRITVEFINGGETLISVIDDGEGMTKEDAILALNRFATSKIKTEEDLYNIKTLGFRGEALASIASVSKVEVRSKTETEDGVFIKVEGGVIQEINLWQGSKGTVIKVFDLFYNVPARRKFLKSKTTETNLIVDFVKRIAMAYPEISFQLIQDGKNKFITSGNGKLEDVVSLLFDIEIHNNLIFLQRKEGNYIIEGFISKPGKLISLKSQDYFYVNRRWVRNNIILQAIKEGYKNRLLEGYFPFSIVFLTLPYHEVDVNVHPTKREIKFEKEKEVYEFVSKAIKEALDSEDKRFFSGVKALEGKEHKNHVGIKTEKELLSLPMEFEHKSENKLSEDISEYISLKSGFRIVGQIFDNYIIVETKDRVYIIDQHAAHERIRYEELKKELSLGYLQNVEILFPLVIEVSEEEKELLNKHKDLLEKFAFSWEDFGPYHIRIIRVPYEFLKFDSKSIENLFQEIISDISEKDLSKLEDKIIKSMACHSAIRSGNILVREEMEVLINLIFERKIPLTCPHGRPYIWEISKEELERYFHRR.

The protein belongs to the DNA mismatch repair MutL/HexB family.

This protein is involved in the repair of mismatches in DNA. It is required for dam-dependent methyl-directed DNA mismatch repair. May act as a 'molecular matchmaker', a protein that promotes the formation of a stable complex between two or more DNA-binding proteins in an ATP-dependent manner without itself being part of a final effector complex. This Dictyoglomus turgidum (strain DSM 6724 / Z-1310) protein is DNA mismatch repair protein MutL.